The primary structure comprises 544 residues: Serine/threonine-protein kinase bur1 (544 aa).

The 302-residue stretch at 25–326 folds into the Protein kinase domain; sequence FEFLGKLGEG…AIDALKHPYF (302 aa). Residues 31–39 and Lys54 each bind ATP; that span reads LGEGTFGEV. Residue Asp155 is the Proton acceptor of the active site. Residues 357 to 544 form a disordered region; that stretch reads AAMPPAPAGG…ERVDRGPYRR (188 aa). Residues 374–403 are compositionally biased toward polar residues; sequence GGWSTNSGSRTGAETRNPRISSAARSQGNQ. Basic and acidic residues-rich tracts occupy residues 419–438, 456–466, 488–511, and 532–544; these read RGNE…HRDG, HSDKTGRDRGY, DRNR…DKSH, and NYRE…PYRR.

This sequence belongs to the protein kinase superfamily. CMGC Ser/Thr protein kinase family. CDC2/CDKX subfamily.

It is found in the nucleus. It catalyses the reaction L-seryl-[protein] + ATP = O-phospho-L-seryl-[protein] + ADP + H(+). The catalysed reaction is L-threonyl-[protein] + ATP = O-phospho-L-threonyl-[protein] + ADP + H(+). It carries out the reaction [DNA-directed RNA polymerase] + ATP = phospho-[DNA-directed RNA polymerase] + ADP + H(+). Serine/threonine-protein kinase involved in transcription regulation. Phosphorylates the UBC2/RAD6 ubiquitin-conjugating enzyme (E2), leading to monoubiquitination of histone H2B and the silencing of telomeric-associated genes. Also required for histone H3 methylation. Necessary for the recovery from pheromone-induced growth arrest in the cell cycle G1 phase. This chain is Serine/threonine-protein kinase bur1 (ptkA), found in Emericella nidulans (strain FGSC A4 / ATCC 38163 / CBS 112.46 / NRRL 194 / M139) (Aspergillus nidulans).